A 483-amino-acid chain; its full sequence is Rhamnulokinase (483 aa).

11–15 contacts ATP; the sequence is ASSGR. Residues glycine 79 and 234–236 each bind substrate; that span reads HDT. The Proton acceptor role is filled by aspartate 235. Threonine 257 lines the ATP pocket. Asparagine 294 serves as a coordination point for substrate. Residue glutamine 302 coordinates ATP. The cysteines at positions 352 and 369 are disulfide-linked. Glycine 401 is an ATP binding site.

This sequence belongs to the rhamnulokinase family. Requires Mg(2+) as cofactor.

It carries out the reaction L-rhamnulose + ATP = L-rhamnulose 1-phosphate + ADP + H(+). The protein operates within carbohydrate degradation; L-rhamnose degradation; glycerone phosphate from L-rhamnose: step 2/3. Involved in the catabolism of L-rhamnose (6-deoxy-L-mannose). Catalyzes the transfer of the gamma-phosphate group from ATP to the 1-hydroxyl group of L-rhamnulose to yield L-rhamnulose 1-phosphate. In Listeria innocua serovar 6a (strain ATCC BAA-680 / CLIP 11262), this protein is Rhamnulokinase.